We begin with the raw amino-acid sequence, 621 residues long: Exonuclease 3'-5' domain-containing protein 2 (621 aa).

Over 1–4 (MSRQ) the chain is Mitochondrial intermembrane. Residues 5–25 (NLVALTVTTLLGVAVGGFVLW) traverse the membrane as a helical segment. Topologically, residues 26-621 (KGIQRRRRSK…FGEDLPIQLS (596 aa)) are cytoplasmic. Positions 34–68 (SKTSPVTQQPQQKVLGSRELPPPEDDQLHSSAPRS) are disordered. Residues 36-47 (TSPVTQQPQQKV) are compositionally biased toward polar residues. Positions 108, 110, and 246 each coordinate a divalent metal cation. In terms of domain architecture, 3'-5' exonuclease spans 155–247 (ILADGTILKV…DQVIYAARDA (93 aa)). The tract at residues 299 to 343 (RLGEEVNGEATESQQKPRNKKSKMDGMVPGNHQGRDPRKHKRKPL) is disordered.

This sequence belongs to the EXD2 family. In terms of assembly, homodimer. Interacts with RBBP8, MRE11 and BRCA1. Mg(2+) serves as cofactor. It depends on Mn(2+) as a cofactor.

The protein localises to the mitochondrion outer membrane. Its subcellular location is the mitochondrion matrix. The protein resides in the nucleus. It localises to the chromosome. The enzyme catalyses Exonucleolytic cleavage in the 3'- to 5'-direction to yield nucleoside 5'-phosphates.. In terms of biological role, exonuclease that has both 3'-5' exoribonuclease and exodeoxyribonuclease activities, depending on the divalent metal cation used as cofactor. In presence of Mg(2+), only shows 3'-5' exoribonuclease activity, while it shows both exoribonuclease and exodeoxyribonuclease activities in presence of Mn(2+). Acts as an exoribonuclease in mitochondrion, possibly by regulating ATP production and mitochondrial translation. Also involved in the response to DNA damage. Acts as 3'-5' exodeoxyribonuclease for double-strand breaks resection and efficient homologous recombination. Plays a key role in controlling the initial steps of chromosomal break repair, it is recruited to chromatin in a damage-dependent manner and functionally interacts with the MRN complex to accelerate resection through its 3'-5' exonuclease activity, which efficiently processes double-stranded DNA substrates containing nicks. Also involved in response to replicative stress: recruited to stalled forks and is required to stabilize and restart stalled replication forks by restraining excessive fork regression, thereby suppressing their degradation. This Homo sapiens (Human) protein is Exonuclease 3'-5' domain-containing protein 2.